Here is a 122-residue protein sequence, read N- to C-terminus: Holo-[acyl-carrier-protein] synthase (122 aa).

Residues Asp8 and Glu52 each coordinate Mg(2+).

It belongs to the P-Pant transferase superfamily. AcpS family. It depends on Mg(2+) as a cofactor.

Its subcellular location is the cytoplasm. It carries out the reaction apo-[ACP] + CoA = holo-[ACP] + adenosine 3',5'-bisphosphate + H(+). Functionally, transfers the 4'-phosphopantetheine moiety from coenzyme A to a Ser of acyl-carrier-protein. This is Holo-[acyl-carrier-protein] synthase from Lachnoclostridium phytofermentans (strain ATCC 700394 / DSM 18823 / ISDg) (Clostridium phytofermentans).